The following is a 246-amino-acid chain: O-antigen export system ATP-binding protein RfbB (246 aa).

One can recognise an ABC transporter domain in the interval 22-246; the sequence is SGIKDLVFHP…IIELYKQAMA (225 aa). 63–70 lines the ATP pocket; the sequence is GRNGAGKS.

This sequence belongs to the ABC transporter superfamily.

Its subcellular location is the cell inner membrane. Functionally, may form an ATP-driven O-antigen export apparatus, in association with RfbA. This is O-antigen export system ATP-binding protein RfbB (rfbB) from Klebsiella pneumoniae.